A 108-amino-acid polypeptide reads, in one-letter code: ATP synthase subunit H, mitochondrial (108 aa).

The N-terminal 19 residues, Met1 to Arg19, are a transit peptide targeting the mitochondrion. Disordered stretches follow at residues Ala40–Val60 and Ala75–Val108. The segment covering Val47 to Val60 has biased composition (low complexity). The segment covering Gly81–Ala92 has biased composition (polar residues). Over residues Asn93–Val108 the composition is skewed to acidic residues.

In terms of assembly, F-type ATP synthases have 2 components, the catalytic core F(1) and the membrane-embedded component F(0), linked together by a central stalk and a peripheral stalk. The central stalk, also called rotor shaft, is often seen as part of F(1). The peripheral stalk is seen as part of F(0). F(0) contains the membrane channel next to the rotor. F-type ATP synthases form dimers but each monomer functions independently in ATP generation. The dimer consists of 17 different polypeptides: ATP1 (subunit alpha, 3 molecules per monomer, part of F(1)), ATP2 (subunit beta, 3 copies per monomer, part of F(1)), ATP3 (subunit gamma, part of the central stalk), ATP4 (subunit b, part of the peripheral stalk), ATP5/OSCP (subunit 5/OSCP, part of the peripheral stalk), ATP6 (subunit a, part of the peripheral stalk), ATP7 (subunit d, part of the peripheral stalk), ATP8 (subunit 8, part of the peripheral stalk), OLI1 (subunit c, part of the rotor, 10 molecules per monomer), ATP14 (subunit H, part of the peripheral stalk), ATP15 (subunit epsilon, part of the central stalk), ATP16 (subunit delta, part of the central stalk), ATP17 (subunit f, part of the peripheral stalk), ATP18 (subunit i/j, part of the peripheral stalk), ATP19 (subunit k, dimer-specific, at interface between monomers), ATP20 (subunit g, at interface between monomers), TIM11 (subunit e, at interface between monomers).

The protein localises to the mitochondrion inner membrane. Its function is as follows. Mitochondrial membrane ATP synthase (F(1)F(0) ATP synthase or Complex V) produces ATP from ADP in the presence of a proton gradient across the membrane which is generated by electron transport complexes of the respiratory chain. F-type ATP synthases consist of two structural domains, F(1) - containing the extramembraneous catalytic core, and F(0) - containing the membrane proton channel, linked together by a central stalk and a peripheral stalk. During catalysis, ATP synthesis in the catalytic domain of F(1) is coupled via a rotary mechanism of the central stalk subunits to proton translocation. Part of the peripheral stalk. This chain is ATP synthase subunit H, mitochondrial, found in Yarrowia lipolytica (strain CLIB 122 / E 150) (Yeast).